Here is a 399-residue protein sequence, read N- to C-terminus: MRLETLPSEFQEALPVLEKIKAAGFEAYFVGGSVRDALLQRPIHDVDIASSSYPEETKRIFDRTVDVGIEHGTVLVLENNREYEVTTFRTEDVYVDYRRPSKVSFVRSLEEDLKRRDFTINALALDENGQVIDLFQGLDDLENQILRAVGTAAERFNEDALRIMRGFRFQAALDFDLEQDTFAAMKDCAPLLEKISVERIFIEFDKLLLAPFWRKGLEALLTSGAIEFLPDLKGSRAKLERLFDLASDFRFSASEQAWAALLLALDVQNVKGFLKKWKTSREFAKKAEDLVEIAAIRSERDLTKRDCYDYDIDLLLQAEELRQAQGLPVDFSAIQNLDASLTIHNKQEMVVNGGMLMQEFGFEPGPKLGQILKELEHAIVDGCLPNDLEAVYAYIEEKK.

Residues G32 and R35 each coordinate ATP. CTP-binding residues include G32 and R35. Residues D45 and D47 each coordinate Mg(2+). The ATP site is built by R116, D159, R162, R165, and R168. Positions 116, 159, 162, 165, and 168 each coordinate CTP.

The protein belongs to the tRNA nucleotidyltransferase/poly(A) polymerase family. Bacterial CCA-adding enzyme type 3 subfamily. As to quaternary structure, homodimer. Mg(2+) serves as cofactor.

It catalyses the reaction a tRNA precursor + 2 CTP + ATP = a tRNA with a 3' CCA end + 3 diphosphate. It carries out the reaction a tRNA with a 3' CCA end + 2 CTP + ATP = a tRNA with a 3' CCACCA end + 3 diphosphate. Catalyzes the addition and repair of the essential 3'-terminal CCA sequence in tRNAs without using a nucleic acid template. Adds these three nucleotides in the order of C, C, and A to the tRNA nucleotide-73, using CTP and ATP as substrates and producing inorganic pyrophosphate. tRNA 3'-terminal CCA addition is required both for tRNA processing and repair. Also involved in tRNA surveillance by mediating tandem CCA addition to generate a CCACCA at the 3' terminus of unstable tRNAs. While stable tRNAs receive only 3'-terminal CCA, unstable tRNAs are marked with CCACCA and rapidly degraded. This Streptococcus sanguinis (strain SK36) protein is CCA-adding enzyme.